The chain runs to 182 residues: MMTPGGSGRLRPLPTAMYAGYSGTASSWVAKTSVSASGKRIQREMAELNIDPPPDCSAGPKGDNLYHWIATIIGPSGTPYEGGIFFLDIIFPSDYPFKPPKLVFKTRIYHCNVDTAGDLSVNILRDSWSPALTITKVLQAIRSIFLKPEPYSPALPVIARLYLTDREKHDEVAKEWTLRFAK.

Residues 36-182 (ASGKRIQREM…AKEWTLRFAK (147 aa)) form the UBC core domain.

It belongs to the ubiquitin-conjugating enzyme family. In terms of assembly, component of the CDD complex, at least composed of COP10, DET1 and DDB1A. Interacts with E3 ubiquitin ligase COP1. Interacts with E2 ubiquitin conjugating UBC5. Interacts with CSN3, CSN4 and CSN8 subunits of the COP9 complex. In terms of tissue distribution, expressed in flower, leaf, stem and seedling. Expressed at lower level in root.

The protein localises to the nucleus. Functionally, component of light signal transduction machinery. Involved in repression of photomorphogenesis in darkness by participating in the CDD complex, a complex probably required to regulate the activity of ubiquitin conjugating enzymes (E2s). Repression of photomorphogenesis is probably mediated by ubiquitination and subsequent degradation of photomorphogenesis-promoting factors such as HY5, HYH and LAF1. Although strongly related to ubiquitin-conjugating enzyme, it has no catalytic activity by itself due to the absence of the conserved Cys active site at position 120. It can however enhance the activity of E2 conjugating enzymes. The chain is Constitutive photomorphogenesis protein 10 (COP10) from Arabidopsis thaliana (Mouse-ear cress).